A 394-amino-acid chain; its full sequence is Mannosyl-3-phosphoglycerate synthase (394 aa).

It belongs to the glycosyltransferase 2 family.

The protein resides in the cytoplasm. The enzyme catalyses (2R)-3-phosphoglycerate + GDP-alpha-D-mannose = 2-O-(alpha-D-mannosyl)-3-phosphoglycerate + GDP + H(+). The protein operates within carbohydrate biosynthesis; 2-(alpha-D-mannosyl)-D-glycerate biosynthesis; 2-(alpha-D-mannosyl)-D-glycerate from GDP-alpha-D-mannose (MPG route): step 1/2. Its function is as follows. Transfers a mannosyl group from GDP-mannose to phosphoglycerate to form mannosyl-3-phosphoglycerate (MPG). This chain is Mannosyl-3-phosphoglycerate synthase (mngA), found in Pyrococcus abyssi (strain GE5 / Orsay).